The chain runs to 118 residues: T cell receptor gamma variable 5 (118 aa).

Residues 1-17 (MRWALLVLLAFLSPASQ) form the signal peptide. The Ig-like domain occupies 18 to 118 (KSSNLEGGTK…GVYYCATWDR (101 aa)). Cys41 and Cys113 are oxidised to a cystine. Asn106 carries N-linked (GlcNAc...) asparagine glycosylation.

Gamma-delta TR is a heterodimer composed of a gamma and delta chain; disulfide-linked. The gamma-delta TR is associated with the transmembrane signaling CD3 coreceptor proteins following the stoichiometry: a single gamma-delta TR heterodimer associates with one CD3D-CD3E heterodimer, one CD3G-CD3E heterodimer and one CD247 homodimer forming a stable octameric structure. Upon activation, gamma-delta TR complex associates with FCER1G to initiate intracellular signaling.

The protein localises to the cell membrane. Its function is as follows. V region of the variable domain of T cell receptor (TR) gamma chain that participates in the antigen recognition. Gamma-delta TRs recognize a variety of self and foreign non-peptide antigens frequently expressed at the epithelial boundaries between the host and external environment, including endogenous lipids presented by MH-like protein CD1D and phosphoantigens presented by butyrophilin-like molecule BTN3A1. Upon antigen recognition induces rapid, innate-like immune responses involved in pathogen clearance and tissue repair. Binding of gamma-delta TR complex to antigen triggers phosphorylation of immunoreceptor tyrosine-based activation motifs (ITAMs) in the CD3 chains by the LCK and FYN kinases, allowing the recruitment, phosphorylation, and activation of ZAP70 that facilitates phosphorylation of the scaffolding proteins LCP2 and LAT. This lead to the formation of a supramolecular signalosome that recruits the phospholipase PLCG1, resulting in calcium mobilization and ERK activation, ultimately leading to T cell expansion and differentiation into effector cells. Gamma-delta TRs are produced through somatic rearrangement of a limited repertoire of variable (V), diversity (D), and joining (J) genes. The potential diversity of gamma-delta TRs is conferred by the unique ability to rearrange (D) genes in tandem and to utilize all three reading frames. The combinatorial diversity is considerably increased by the sequence exonuclease trimming and random nucleotide (N) region additions which occur during the V-(D)-J rearrangements. This chain is T cell receptor gamma variable 5, found in Homo sapiens (Human).